A 379-amino-acid polypeptide reads, in one-letter code: Glucose-1-phosphate adenylyltransferase (379 aa).

Alpha-D-glucose 1-phosphate-binding positions include G164, 179–180 (EK), and S190.

Belongs to the bacterial/plant glucose-1-phosphate adenylyltransferase family. In terms of assembly, homotetramer.

The catalysed reaction is alpha-D-glucose 1-phosphate + ATP + H(+) = ADP-alpha-D-glucose + diphosphate. The protein operates within glycan biosynthesis; glycogen biosynthesis. Its function is as follows. Involved in the biosynthesis of ADP-glucose, a building block required for the elongation reactions to produce glycogen. Catalyzes the reaction between ATP and alpha-D-glucose 1-phosphate (G1P) to produce pyrophosphate and ADP-Glc. The protein is Glucose-1-phosphate adenylyltransferase of Streptococcus equi subsp. zooepidemicus (strain H70).